Here is a 426-residue protein sequence, read N- to C-terminus: Probable auxin efflux carrier component 9 (426 aa).

The Extracellular portion of the chain corresponds to 1–6 (MITGSE). The helical transmembrane segment at 7-27 (VYQVVEAMAPLYTAAALGYGS) threads the bilayer. Residues 28–38 (VRWLKAFSNEQ) lie on the Cytoplasmic side of the membrane. Residues 39-59 (CAGINHFVALYAVPVLIFDMV) traverse the membrane as a helical segment. V51 serves as a coordination point for (indol-3-yl)acetate. Residues 60-70 (STNNVYKMNGR) lie on the Extracellular side of the membrane. Residues 71–91 (LIAADTLQKAVLLLGLMAWAL) traverse the membrane as a helical segment. Residues 92–114 (WERSRARGAGAKAKAAVSSPLQW) lie on the Cytoplasmic side of the membrane. Residues 115–135 (VITCFSVASLPNTIIMGVPLL) traverse the membrane as a helical segment. Positions 126 and 128 each coordinate (indol-3-yl)acetate. Residues 136–145 (NGMYGPVSKD) lie on the Extracellular side of the membrane. Residues 146 to 166 (LMKQIVVMQFCIWYNVIIFLY) traverse the membrane as a helical segment. Residue Y159 participates in (indol-3-yl)acetate binding. The Cytoplasmic portion of the chain corresponds to 167-286 (EYMAARRSAS…LLQIPNTYAS (120 aa)). Positions 232 to 258 (RDGVSGETTAAAKEVSSGEVAPVEEEE) are disordered. The helical transmembrane segment at 287 to 307 (FLGLIWSLIAFKCGFSMPKIV) threads the bilayer. Topologically, residues 308–310 (EDS) are extracellular. A helical membrane pass occupies residues 311 to 331 (LFTIRTTAVGLSMFSSGTFIA). Topologically, residues 332-347 (RQSRFVPCGYKIASFS) are cytoplasmic. The helical transmembrane segment at 348–368 (MVIKFLIGPVVMLFASLVIGM) threads the bilayer. Residues 369-371 (HGT) lie on the Extracellular side of the membrane. The chain crosses the membrane as a helical span at residues 372-392 (LLHIAVVQAALPLAVTSFVYA). V386 provides a ligand contact to (indol-3-yl)acetate. The Cytoplasmic segment spans residues 393–405 (EEYKVHADIMSTG). The helical transmembrane segment at 406-426 (VILGIFISLPVTIVYYILLGL) threads the bilayer.

This sequence belongs to the auxin efflux carrier (TC 2.A.69.1) family. Homodimer. Expressed in roots, leaves and shoot apex. Expressed in roots, stem bases, stems, leaves and young panicles.

Its subcellular location is the membrane. May act as a component of the auxin efflux carrier. The chain is Probable auxin efflux carrier component 9 from Oryza sativa subsp. japonica (Rice).